The primary structure comprises 425 residues: Perilipin-2 (425 aa).

Ala2 is subject to N-acetylalanine. Ser213 carries the post-translational modification Phosphoserine. Position 230 is a phosphotyrosine (Tyr230).

This sequence belongs to the perilipin family. Interacts with IRGC. Acylated; primarily with C14, C16 and C18 fatty acids. In terms of processing, phosphorylation at Tyr-230 by isoform 1 of CHKA (CHKalpha2) promotes dissociation from lipid droplets: dissociation is followed by recruitment of autophagosome machinery to lipid droplets and subsequent lipid droplet lipolysis. Post-translationally, polyubiquitination of Nt-acetylatable A-PLIN2 by MARCHF6 lead to degradation by 26S proteasomes. As to expression, adipose tissue specific. Expressed abundantly and preferentially in fat pads.

It localises to the membrane. The protein resides in the lipid droplet. Structural component of lipid droplets, which is required for the formation and maintenance of lipid storage droplets. In Mus musculus (Mouse), this protein is Perilipin-2.